The following is a 180-amino-acid chain: Large ribosomal subunit protein uL6 (180 aa).

The protein belongs to the universal ribosomal protein uL6 family. Part of the 50S ribosomal subunit.

In terms of biological role, this protein binds to the 23S rRNA, and is important in its secondary structure. It is located near the subunit interface in the base of the L7/L12 stalk, and near the tRNA binding site of the peptidyltransferase center. This is Large ribosomal subunit protein uL6 from Anaeromyxobacter sp. (strain K).